The chain runs to 100 residues: Integration host factor subunit alpha (100 aa).

Residues 53–72 are disordered; sequence FQLRDKPQRPGRNPKTGEEV.

It belongs to the bacterial histone-like protein family. As to quaternary structure, heterodimer of an alpha and a beta chain.

Its function is as follows. This protein is one of the two subunits of integration host factor, a specific DNA-binding protein that functions in genetic recombination as well as in transcriptional and translational control. The protein is Integration host factor subunit alpha of Neisseria gonorrhoeae (strain ATCC 700825 / FA 1090).